Here is a 297-residue protein sequence, read N- to C-terminus: Probable porphobilinogen deaminase (297 aa).

Position 241 is an S-(dipyrrolylmethanemethyl)cysteine (cysteine 241).

Belongs to the HMBS family. Requires dipyrromethane as cofactor.

The catalysed reaction is 4 porphobilinogen + H2O = hydroxymethylbilane + 4 NH4(+). Its pathway is porphyrin-containing compound metabolism; protoporphyrin-IX biosynthesis; coproporphyrinogen-III from 5-aminolevulinate: step 2/4. In terms of biological role, tetrapolymerization of the monopyrrole PBG into the hydroxymethylbilane pre-uroporphyrinogen in several discrete steps. This is Probable porphobilinogen deaminase from Pyrobaculum arsenaticum (strain DSM 13514 / JCM 11321 / PZ6).